Reading from the N-terminus, the 436-residue chain is Adenylosuccinate synthetase (436 aa).

GTP-binding positions include 21–27 (GDEGKGK) and 49–51 (GHT). The Proton acceptor role is filled by aspartate 22. The Mg(2+) site is built by aspartate 22 and glycine 49. IMP-binding positions include 22-25 (DEGK), 47-50 (NAGH), threonine 135, arginine 149, glutamine 230, threonine 245, and arginine 309. Histidine 50 (proton donor) is an active-site residue. Substrate is bound at residue 305-311 (TTTGRPR). GTP-binding positions include arginine 311, 337-339 (KVD), and 423-425 (SSG).

This sequence belongs to the adenylosuccinate synthetase family. As to quaternary structure, homodimer. Requires Mg(2+) as cofactor.

It localises to the cytoplasm. It catalyses the reaction IMP + L-aspartate + GTP = N(6)-(1,2-dicarboxyethyl)-AMP + GDP + phosphate + 2 H(+). The protein operates within purine metabolism; AMP biosynthesis via de novo pathway; AMP from IMP: step 1/2. Plays an important role in the de novo pathway of purine nucleotide biosynthesis. Catalyzes the first committed step in the biosynthesis of AMP from IMP. The protein is Adenylosuccinate synthetase of Thermoplasma volcanium (strain ATCC 51530 / DSM 4299 / JCM 9571 / NBRC 15438 / GSS1).